Reading from the N-terminus, the 297-residue chain is Protoheme IX farnesyltransferase (297 aa).

Transmembrane regions (helical) follow at residues 12–32, 36–56, 85–105, 108–128, 133–153, 163–183, 209–229, 230–250, and 266–286; these read PGII…AAKG, YALF…GCVF, VSLV…YLAA, LAMW…SLYM, VYGT…GYCA, LILL…IAIF, ITLY…SGYA, GYKY…MALQ, and FIFS…DFMV.

It belongs to the UbiA prenyltransferase family. Protoheme IX farnesyltransferase subfamily.

The protein resides in the cell inner membrane. The catalysed reaction is heme b + (2E,6E)-farnesyl diphosphate + H2O = Fe(II)-heme o + diphosphate. The protein operates within porphyrin-containing compound metabolism; heme O biosynthesis; heme O from protoheme: step 1/1. In terms of biological role, converts heme B (protoheme IX) to heme O by substitution of the vinyl group on carbon 2 of heme B porphyrin ring with a hydroxyethyl farnesyl side group. This Sodalis glossinidius (strain morsitans) protein is Protoheme IX farnesyltransferase.